The sequence spans 241 residues: Triosephosphate isomerase (241 aa).

8–10 (NWK) provides a ligand contact to substrate. The active-site Electrophile is His-93. Glu-163 acts as the Proton acceptor in catalysis. Residues Gly-169, Ser-205, and 226–227 (GG) each bind substrate.

It belongs to the triosephosphate isomerase family. As to quaternary structure, homodimer.

The protein localises to the cytoplasm. The catalysed reaction is D-glyceraldehyde 3-phosphate = dihydroxyacetone phosphate. It functions in the pathway carbohydrate biosynthesis; gluconeogenesis. The protein operates within carbohydrate degradation; glycolysis; D-glyceraldehyde 3-phosphate from glycerone phosphate: step 1/1. Its function is as follows. Involved in the gluconeogenesis. Catalyzes stereospecifically the conversion of dihydroxyacetone phosphate (DHAP) to D-glyceraldehyde-3-phosphate (G3P). The chain is Triosephosphate isomerase from Bdellovibrio bacteriovorus (strain ATCC 15356 / DSM 50701 / NCIMB 9529 / HD100).